Here is a 297-residue protein sequence, read N- to C-terminus: 4-hydroxy-tetrahydrodipicolinate synthase (297 aa).

Thr49 contacts pyruvate. Residue Tyr137 is the Proton donor/acceptor of the active site. Lys166 acts as the Schiff-base intermediate with substrate in catalysis. Ile208 lines the pyruvate pocket.

The protein belongs to the DapA family. In terms of assembly, homotetramer; dimer of dimers.

The protein localises to the cytoplasm. It catalyses the reaction L-aspartate 4-semialdehyde + pyruvate = (2S,4S)-4-hydroxy-2,3,4,5-tetrahydrodipicolinate + H2O + H(+). Its pathway is amino-acid biosynthesis; L-lysine biosynthesis via DAP pathway; (S)-tetrahydrodipicolinate from L-aspartate: step 3/4. Functionally, catalyzes the condensation of (S)-aspartate-beta-semialdehyde [(S)-ASA] and pyruvate to 4-hydroxy-tetrahydrodipicolinate (HTPA). The protein is 4-hydroxy-tetrahydrodipicolinate synthase of Prosthecochloris aestuarii (strain DSM 271 / SK 413).